We begin with the raw amino-acid sequence, 298 residues long: MMESGAGFVAMEERISPGSFFQYPLSGFRASPNRSPCPPSDRERYLTELLQERQKLGPFLQVMPNCCRLLNHEIRRVSSFPDLDRYEHGSPFRSLGQPTNGKLDLEGWSMMQAEENCHLQRASPFRGPSPVGWIGMPGLPNPPIVKKVIRLDVPVDKYPSYNFVGRILGPRGNSLKRVELATHCRVFIRGRGSVKDTVKEEKLKGKPGYEHLCEPLHVLIEAELPEDIINSRLEHAVHFLESLLKPMDESMDHYKREQLKELAALNGTLREESPSPSLSPCLSPSMSPFNSKRAKTEI.

A KH domain is found at 152–219; that stretch reads DVPVDKYPSY…EHLCEPLHVL (68 aa). Positions 266-298 are disordered; sequence NGTLREESPSPSLSPCLSPSMSPFNSKRAKTEI. Serine 273 and serine 287 each carry phosphoserine. Residues 274-288 are compositionally biased toward low complexity; that stretch reads PSPSLSPCLSPSMSP.

The protein localises to the nucleus. This Arabidopsis thaliana (Mouse-ear cress) protein is KH domain-containing protein At1g09660/At1g09670.